A 181-amino-acid polypeptide reads, in one-letter code: MGIPMRKPLLVLLVFLALASCCYAAYRPSETLCGGELVDTLQFVCGDRGFYFSRPASRVNRRSRGIVEECCFRSCDLALLETYCATPAKSERDVSTPPTVLPDNFPRYPVGKFFRYDTWKQSAQRLRRGLPALLRARRGRTLAKELEAVREAKRHRPLTARPTRDPAAHGGASPEASGHRK.

A signal peptide spans 1-24; it reads MGIPMRKPLLVLLVFLALASCCYA. Residues 25–52 are b; the sequence is AYRPSETLCGGELVDTLQFVCGDRGFYF. 3 disulfides stabilise this stretch: C33-C71, C45-C84, and C70-C75. The tract at residues 53-64 is c; the sequence is SRPASRVNRRSR. Residues 65-85 form an a region; it reads GIVEECCFRSCDLALLETYCA. Residues 86–91 form a d region; the sequence is TPAKSE. Positions 92-181 are cleaved as a propeptide — e peptide; that stretch reads RDVSTPPTVL…ASPEASGHRK (90 aa). The tract at residues 151–181 is disordered; sequence EAKRHRPLTARPTRDPAAHGGASPEASGHRK. An O-linked (GalNAc...) threonine glycan is attached at T163.

It belongs to the insulin family. In terms of assembly, interacts with MYORG; this interaction is required for IGF2 secretion. Interacts with integrins ITGAV:ITGB3 and ITGA6:ITGB4; integrin-binding is required for IGF2 signaling. Interacts with IGFBP2. Post-translationally, proteolytically processed by PCSK4, proIGF2 is cleaved at Arg-128 and Arg-92 to generate big-IGF2 and mature IGF2.

It localises to the secreted. Functionally, the insulin-like growth factors possess growth-promoting activity. Major fetal growth hormone in mammals. Plays a key role in regulating fetoplacental development. IGF2 is influenced by placental lactogen. Also involved in tissue differentiation. In adults, involved in glucose metabolism in adipose tissue, skeletal muscle and liver. Acts as a ligand for integrin which is required for IGF2 signaling. Positively regulates myogenic transcription factor MYOD1 function by facilitating the recruitment of transcriptional coactivators, thereby controlling muscle terminal differentiation. Inhibits myoblast differentiation and modulates metabolism via increasing the mitochondrial respiration rate. Its function is as follows. Preptin undergoes glucose-mediated co-secretion with insulin, and acts as a physiological amplifier of glucose-mediated insulin secretion. Exhibits osteogenic properties by increasing osteoblast mitogenic activity through phosphoactivation of MAPK1 and MAPK3. This chain is Insulin-like growth factor 2, found in Sus scrofa (Pig).